Consider the following 247-residue polypeptide: MSSNTPSQLTRDLRFFLTVPHGCSYLPDREATTLFLDPQEQPGQGVYDALALLGFRRSGRHLYRPHCEGCRACISVRIPVEDFTPKRTQRKLISRNVDLETRMLPAAFYEEHYALYARYIRTRHADGDMYPPSHEQYRTFLTLDHPYARLIEFRLQGQLLGVAATDLLSHGVSAIYTFFDPSPAFERRSLGTYAILHQIELARRLGRPHVYLGYWIRQCRKMSYKQDFEPLEYLDGRHWRRQIPLVE.

It belongs to the R-transferase family. Bpt subfamily.

The protein localises to the cytoplasm. The enzyme catalyses N-terminal L-glutamyl-[protein] + L-leucyl-tRNA(Leu) = N-terminal L-leucyl-L-glutamyl-[protein] + tRNA(Leu) + H(+). The catalysed reaction is N-terminal L-aspartyl-[protein] + L-leucyl-tRNA(Leu) = N-terminal L-leucyl-L-aspartyl-[protein] + tRNA(Leu) + H(+). Its function is as follows. Functions in the N-end rule pathway of protein degradation where it conjugates Leu from its aminoacyl-tRNA to the N-termini of proteins containing an N-terminal aspartate or glutamate. In Chromohalobacter salexigens (strain ATCC BAA-138 / DSM 3043 / CIP 106854 / NCIMB 13768 / 1H11), this protein is Aspartate/glutamate leucyltransferase.